The chain runs to 339 residues: D-erythrose-4-phosphate dehydrogenase (339 aa).

NAD(+)-binding positions include arginine 12–isoleucine 13 and arginine 81. Residues serine 154–threonine 156, arginine 200, threonine 213–lysine 214, and arginine 236 each bind substrate. Cysteine 155 functions as the Nucleophile in the catalytic mechanism. Asparagine 318 is an NAD(+) binding site.

This sequence belongs to the glyceraldehyde-3-phosphate dehydrogenase family. Epd subfamily. As to quaternary structure, homotetramer.

Its subcellular location is the cytoplasm. The catalysed reaction is D-erythrose 4-phosphate + NAD(+) + H2O = 4-phospho-D-erythronate + NADH + 2 H(+). The protein operates within cofactor biosynthesis; pyridoxine 5'-phosphate biosynthesis; pyridoxine 5'-phosphate from D-erythrose 4-phosphate: step 1/5. Catalyzes the NAD-dependent conversion of D-erythrose 4-phosphate to 4-phosphoerythronate. The polypeptide is D-erythrose-4-phosphate dehydrogenase (Escherichia fergusonii (strain ATCC 35469 / DSM 13698 / CCUG 18766 / IAM 14443 / JCM 21226 / LMG 7866 / NBRC 102419 / NCTC 12128 / CDC 0568-73)).